The following is a 330-amino-acid chain: MATH domain and coiled-coil domain-containing protein At3g58210 (330 aa).

The MATH domain occupies 6–133; sequence DNKFTWVIQN…NDELKIVAEV (128 aa). Residues 263 to 314 are a coiled coil; sequence FKVDWLEKKLEEVKKKKEEEQTGEARIQELEEELKEFKQKCLDREAMLEKEK.

The polypeptide is MATH domain and coiled-coil domain-containing protein At3g58210 (Arabidopsis thaliana (Mouse-ear cress)).